A 470-amino-acid polypeptide reads, in one-letter code: Sulfate adenylyltransferase subunit 1 (470 aa).

One can recognise a tr-type G domain in the interval Lys-22–Ala-236. Residues Gly-31–Ser-38 form a G1 region. Gly-31–Ser-38 serves as a coordination point for GTP. The interval Gly-89–Asp-93 is G2. The interval Asp-110–Gly-113 is G3. GTP-binding positions include Asp-110–His-114 and Asn-165–Asp-168. Residues Asn-165–Asp-168 are G4. Residues Ser-202–Leu-204 are G5.

It belongs to the TRAFAC class translation factor GTPase superfamily. Classic translation factor GTPase family. CysN/NodQ subfamily. Heterodimer composed of CysD, the smaller subunit, and CysN.

The catalysed reaction is sulfate + ATP + H(+) = adenosine 5'-phosphosulfate + diphosphate. The protein operates within sulfur metabolism; hydrogen sulfide biosynthesis; sulfite from sulfate: step 1/3. Its function is as follows. With CysD forms the ATP sulfurylase (ATPS) that catalyzes the adenylation of sulfate producing adenosine 5'-phosphosulfate (APS) and diphosphate, the first enzymatic step in sulfur assimilation pathway. APS synthesis involves the formation of a high-energy phosphoric-sulfuric acid anhydride bond driven by GTP hydrolysis by CysN coupled to ATP hydrolysis by CysD. The polypeptide is Sulfate adenylyltransferase subunit 1 (Francisella tularensis subsp. novicida (strain U112)).